A 336-amino-acid chain; its full sequence is Ferrochelatase (336 aa).

Fe cation is bound by residues His-206 and Glu-287.

This sequence belongs to the ferrochelatase family.

The protein resides in the cytoplasm. The enzyme catalyses heme b + 2 H(+) = protoporphyrin IX + Fe(2+). It participates in porphyrin-containing compound metabolism; protoheme biosynthesis; protoheme from protoporphyrin-IX: step 1/1. Functionally, catalyzes the ferrous insertion into protoporphyrin IX. This chain is Ferrochelatase, found in Neisseria meningitidis serogroup B (strain ATCC BAA-335 / MC58).